The sequence spans 336 residues: Vacuolar protein sorting-associated protein 26B (336 aa).

A phosphoserine mark is found at Ser-302, Ser-304, and Ser-319.

The protein belongs to the VPS26 family. As to quaternary structure, component of the heterotrimeric retromer cargo-selective complex (CSC), also described as vacuolar protein sorting VPS subcomplex (VPS,) formed by VPS26 (VPS26A or VPS26B), VPS29 and VPS35. The CSC has a highly elongated structure with VPS26 and VPS29 binding independently at opposite distal ends of VPS35 as central platform. The CSC is believed to associate with variable sorting nexins to form functionally distinct retromer complex variants. The originally described retromer complex (also called SNX-BAR retromer) is a pentamer containing the CSC and a heterodimeric membrane-deforming subcomplex formed between SNX1 or SNX2 and SNX5 or SNX6 (also called SNX-BAR subcomplex); the respective CSC and SNX-BAR subcomplexes associate with low affinity. The CSC associates with SNX3 to form a SNX3-retromer complex. The CSC associates with SNX27, the WASH complex and the SNX-BAR subcomplex to form the SNX27-retromer complex. Interacts with VPS29, VPS35, TBC1D5, GOLPH3, SNX27.

Its subcellular location is the cytoplasm. It localises to the membrane. The protein resides in the early endosome. The protein localises to the late endosome. Functionally, acts as a component of the retromer cargo-selective complex (CSC). The CSC is believed to be the core functional component of retromer or respective retromer complex variants acting to prevent missorting of selected transmembrane cargo proteins into the lysosomal degradation pathway. The recruitment of the CSC to the endosomal membrane involves RAB7A and SNX3. The SNX-BAR retromer mediates retrograde transport of cargo proteins from endosomes to the trans-Golgi network (TGN) and is involved in endosome-to-plasma membrane transport for cargo protein recycling. The SNX3-retromer mediates the retrograde transport of WLS distinct from the SNX-BAR retromer pathway. The SNX27-retromer is believed to be involved in endosome-to-plasma membrane trafficking and recycling of a broad spectrum of cargo proteins. The CSC seems to act as recruitment hub for other proteins, such as the WASH complex and TBC1D5. May be involved in retrograde transport of SORT1 but not of IGF2R. Acts redundantly with VSP26A in SNX-27 mediated endocytic recycling of SLC2A1/GLUT1. In Homo sapiens (Human), this protein is Vacuolar protein sorting-associated protein 26B (VPS26B).